We begin with the raw amino-acid sequence, 137 residues long: Large ribosomal subunit protein mL61 (137 aa).

This sequence belongs to the mitochondrion-specific ribosomal protein mL61 family. Component of the mitochondrial large ribosomal subunit (mt-LSU). Mature yeast 74S mitochondrial ribosomes consist of a small (37S) and a large (54S) subunit. The 37S small subunit contains a 15S ribosomal RNA (15S mt-rRNA) and 34 different proteins. The 54S large subunit contains a 21S rRNA (21S mt-rRNA) and 46 different proteins.

It localises to the mitochondrion. In terms of biological role, component of the mitochondrial ribosome (mitoribosome), a dedicated translation machinery responsible for the synthesis of mitochondrial genome-encoded proteins, including at least some of the essential transmembrane subunits of the mitochondrial respiratory chain. The mitoribosomes are attached to the mitochondrial inner membrane and translation products are cotranslationally integrated into the membrane. mL61 is not essential in cells grown at 30 degrees Celsius but is required for mitochondrial translation in cells grown at 18 degrees Celsius. This chain is Large ribosomal subunit protein mL61 (MRP49), found in Saccharomyces cerevisiae (strain ATCC 204508 / S288c) (Baker's yeast).